The sequence spans 1097 residues: DNA polymerase catalytic subunit (1097 aa).

The disordered stretch occupies residues 1069–1097 (RGGDDSDGGDSEKENMDTERSSSHEAMET). A compositionally biased stretch (basic and acidic residues) spans 1078-1097 (DSEKENMDTERSSSHEAMET).

The protein belongs to the DNA polymerase type-B family.

Its subcellular location is the host nucleus. It catalyses the reaction DNA(n) + a 2'-deoxyribonucleoside 5'-triphosphate = DNA(n+1) + diphosphate. In Murid herpesvirus 1 (strain Smith) (MuHV-1), this protein is DNA polymerase catalytic subunit (UL54).